The primary structure comprises 472 residues: Protein translocase subunit SecD (472 aa).

The next 6 membrane-spanning stretches (helical) occupy residues 7–27, 298–318, 326–345, 349–368, 392–414, and 432–452; these read LLLL…KLPL, LVAG…YYRL, SLMI…GVTL, GIAG…VLIF, AFSS…FWFG, and SLFT…LSLP.

This sequence belongs to the SecD/SecF family. SecD subfamily. In terms of assembly, forms a complex with SecF. Part of the essential Sec protein translocation apparatus which comprises SecA, SecYEG and auxiliary proteins SecDF. Other proteins may also be involved.

Its subcellular location is the cell inner membrane. In terms of biological role, part of the Sec protein translocase complex. Interacts with the SecYEG preprotein conducting channel. SecDF uses the proton motive force (PMF) to complete protein translocation after the ATP-dependent function of SecA. Functionally, probably participates in protein translocation into and across both the cytoplasmic and thylakoid membranes in cyanobacterial cells. In Synechocystis sp. (strain ATCC 27184 / PCC 6803 / Kazusa), this protein is Protein translocase subunit SecD.